Here is a 317-residue protein sequence, read N- to C-terminus: MNIESQSSVSEKFSPFLTFTRKQWAELRKSVPLKLTEQDLKPLLGFNEELSLEEVSTIYLPLARLINYYIEENLRRQTVMNRFLGNTNANVPYIISIAGSVSVGKSTSARILQSLLSNWPENRKVDLITTDGFLYPLEKLKKENLLHKKGFPVSYDTPKLIKFLADVKSGKPNVSAPIYSHLTYDIIPDKFNKVDRPDILILEGLNVLQTGSRKAEQTFVSDFVDFSVYVDADEALLKEWYIRRFLKFRESAFTDPNSYFKDYAKLSKEEAVETAANIWNTINGLNLRQNILPTRERANLILRKGADHAVQEVKLRK.

99–106 (GSVSVGKS) lines the ATP pocket.

Belongs to the prokaryotic pantothenate kinase family.

Its subcellular location is the cytoplasm. It carries out the reaction (R)-pantothenate + ATP = (R)-4'-phosphopantothenate + ADP + H(+). The protein operates within cofactor biosynthesis; coenzyme A biosynthesis; CoA from (R)-pantothenate: step 1/5. In Mannheimia succiniciproducens (strain KCTC 0769BP / MBEL55E), this protein is Pantothenate kinase.